A 133-amino-acid chain; its full sequence is ATP synthase epsilon chain, chloroplastic (133 aa).

Belongs to the ATPase epsilon chain family. As to quaternary structure, F-type ATPases have 2 components, CF(1) - the catalytic core - and CF(0) - the membrane proton channel. CF(1) has five subunits: alpha(3), beta(3), gamma(1), delta(1), epsilon(1). CF(0) has three main subunits: a, b and c.

It localises to the plastid. Its subcellular location is the chloroplast thylakoid membrane. In terms of biological role, produces ATP from ADP in the presence of a proton gradient across the membrane. The sequence is that of ATP synthase epsilon chain, chloroplastic from Trieres chinensis (Marine centric diatom).